We begin with the raw amino-acid sequence, 736 residues long: Replication restart protein PriA (736 aa).

Residues 230–396 (DFKGNISKEN…KEGRIRTFNF (167 aa)) form the Helicase ATP-binding domain. Residue 243–250 (GPTGSGKT) coordinates ATP. The DEAH box motif lies at 339 to 342 (DEEH). Positions 452, 455, 461, 464, 479, 482, 492, and 495 each coordinate Zn(2+). In terms of domain architecture, Helicase C-terminal spans 487–643 (GLVESCPRCG…EELERRKALG (157 aa)).

Belongs to the helicase family. PriA subfamily. In terms of assembly, component of the replication restart primosome. Requires Zn(2+) as cofactor.

The catalysed reaction is Couples ATP hydrolysis with the unwinding of duplex DNA by translocating in the 3'-5' direction.. It catalyses the reaction ATP + H2O = ADP + phosphate + H(+). In terms of biological role, initiates the restart of stalled replication forks, which reloads the replicative helicase on sites other than the origin of replication. Recognizes and binds to abandoned replication forks and remodels them to uncover a helicase loading site. Promotes assembly of the primosome at these replication forks. The polypeptide is Replication restart protein PriA (Thermotoga maritima (strain ATCC 43589 / DSM 3109 / JCM 10099 / NBRC 100826 / MSB8)).